Here is a 246-residue protein sequence, read N- to C-terminus: tRNA pseudouridine synthase A (246 aa).

The Nucleophile role is filled by Asp52. Tyr111 serves as a coordination point for substrate.

The protein belongs to the tRNA pseudouridine synthase TruA family. Homodimer.

It catalyses the reaction uridine(38/39/40) in tRNA = pseudouridine(38/39/40) in tRNA. Functionally, formation of pseudouridine at positions 38, 39 and 40 in the anticodon stem and loop of transfer RNAs. This is tRNA pseudouridine synthase A from Parvibaculum lavamentivorans (strain DS-1 / DSM 13023 / NCIMB 13966).